We begin with the raw amino-acid sequence, 2849 residues long: Immunoglobulin-like and fibronectin type III domain-containing protein 1 (2849 aa).

The tract at residues 82–108 is disordered; that stretch reads AGSAARPDGSGSESLAASSSWKPRRRL. A compositionally biased stretch (low complexity) spans 90–101; it reads GSGSESLAASSS. The region spanning 187-277 is the Ig-like 1 domain; it reads PDFKQKPVTL…GEATCSVRLT (91 aa). Residues 347-380 adopt a coiled-coil conformation; it reads IVDFRGMLRKLQEMKKEQEDRMAQYVSAIANLRH. The Ig-like 2 domain maps to 468-557; sequence PRVVVPLAET…SSAWLVVEGG (90 aa). 12 disordered regions span residues 577-600, 652-760, 864-924, 962-981, 1061-1103, 1221-1258, 1312-1338, 1350-1384, 1498-1523, 1654-1675, 1724-1780, and 1827-2055; these read LASE…RGSL, VTLP…AGQR, YPGQ…DLRS, VGQR…IGPQ, EEEF…EGMA, TVGS…SSWG, STVG…SEGH, RDGS…PDGE, ETGR…MGSE, EWKD…SEEI, QQGV…ATSH, and GAAG…SMDH. Residues 717–742 show a composition bias toward basic and acidic residues; the sequence is HPRDRRLESRGEGQEHSEGHGSELDR. The span at 866–880 shows a compositional bias: polar residues; the sequence is GQTSEGNDTQKSSLS. Positions 1070–1084 are enriched in gly residues; that stretch reads RSQGKGSRGGMGLGG. The segment covering 1873 to 1882 has biased composition (polar residues); sequence SKPQEPQNEL. Basic and acidic residues-rich tracts occupy residues 1988–2004 and 2012–2021; these read SEDR…DRRQ and SRRDTQEGRS. The 104-residue stretch at 2034 to 2137 folds into the Ig-like 3 domain; the sequence is PRSRYQPGTG…GCQHSEASLT (104 aa). 3 Fibronectin type-III domains span residues 2244 to 2339, 2344 to 2443, and 2445 to 2540; these read PPQG…VAPE, PPSA…MRPP, and PVRD…AMPA. Positions 2544 to 2628 constitute an Ig-like 4 domain; the sequence is PRFLMDSGTK…LRNLQGKEAT (85 aa). The Fibronectin type-III 4 domain maps to 2641–2735; that stretch reads APGSIYLQEN…TSQPWCIPRQ (95 aa). Positions 2749-2845 constitute an Ig-like 5 domain; it reads PDLSQKPRFL…AVSTATLIVT (97 aa).

As to quaternary structure, interacts with FLNC. Interacts with KY. In terms of tissue distribution, isoform 1, isoform 3 and isoform 4 are expressed in skeletal muscle while isoform 2 is detected in both skeletal muscle and heart (at protein level).

It is found in the nucleus. The protein localises to the cytoplasm. Its subcellular location is the myofibril. The protein resides in the sarcomere. It localises to the z line. The polypeptide is Immunoglobulin-like and fibronectin type III domain-containing protein 1 (Igfn1) (Mus musculus (Mouse)).